The chain runs to 68 residues: Guanine nucleotide-binding protein G(I)/G(S)/G(O) subunit gamma-5 (68 aa).

Position 2 is an N-acetylserine (Ser-2). Ser-2 carries the phosphoserine modification. A Cysteine methyl ester modification is found at Cys-65. Cys-65 carries the S-geranylgeranyl cysteine lipid modification. Residues 66 to 68 (SFL) constitute a propeptide, removed in mature form.

Belongs to the G protein gamma family. As to quaternary structure, g proteins are composed of 3 units, alpha, beta and gamma. As to expression, expressed in a variety of tissues.

The protein resides in the cell membrane. Its function is as follows. Guanine nucleotide-binding proteins (G proteins) are involved as a modulator or transducer in various transmembrane signaling systems. The beta and gamma chains are required for the GTPase activity, for replacement of GDP by GTP, and for G protein-effector interaction. The chain is Guanine nucleotide-binding protein G(I)/G(S)/G(O) subunit gamma-5 (GNG5) from Bos taurus (Bovine).